The chain runs to 692 residues: Follicle-stimulating hormone receptor (692 aa).

The N-terminal stretch at 1–17 (MALLLVSLLAFLGTGSG) is a signal peptide. 2 disulfides stabilise this stretch: C18/C25 and C23/C32. Residues 18–46 (CHHWLCHCSNRVFLCQDSKVTEIPTDLPR) enclose the LRRNT domain. Residues 18-365 (CHHWLCHCSN…EDIMGYNILR (348 aa)) lie on the Extracellular side of the membrane. LRR repeat units lie at residues 49–72 (IELRFVLTKLRVIPKGSFAGFGDL), 73–97 (EKIEISQNDVLEVIEADVFSNLPKL), 98–118 (HEIRIEKANNLLYINPEAFQN), 119–143 (LPSLRYLLISNTGIKHLPAVHKIQS), 144–169 (LQKVLLDIQDNINIHIVARNSFMGLS), 170–192 (FESVILWLSKNGIEEIHNCAFNG), 193–216 (TQLDELNLSDNNNLEELPNDVFQG), 217–240 (ASGPVILDISRTKVHSLPNHGLEN), and 241–259 (LKKLRARSTYRLKKLPNLD). N191 and N199 each carry an N-linked (GlcNAc...) asparagine glycan. Cystine bridges form between C275/C345, C276/C292, C276/C355, and C292/C337. N293 carries N-linked (GlcNAc...) asparagine glycosylation. Y334 carries the post-translational modification Sulfotyrosine. Residues 366–386 (VLIWFISILAITGNTTVLVVL) form a helical membrane-spanning segment. Over 387-397 (TTSQYKLTVPR) the chain is Cytoplasmic. A helical membrane pass occupies residues 398–420 (FLMCNLAFADLCIGIYLLLIASV). Residues 421–442 (DIHTKSQYHNYAIDWQTGAGCD) are Extracellular-facing. Residues C441 and C516 are joined by a disulfide bond. The chain crosses the membrane as a helical span at residues 443-464 (AAGFFTVFASELSVYTLTAITL). Residues 465-484 (ERWHTITHAMQLECKVQLRH) lie on the Cytoplasmic side of the membrane. The chain crosses the membrane as a helical span at residues 485 to 507 (AASVMVLGWTFAFAAALFPIFGI). The Extracellular portion of the chain corresponds to 508 to 527 (SSYMKVSICLPMDIDSPLSQ). A helical transmembrane segment spans residues 528–549 (LYVMALLVLNVLAFVVICGCYT). Residues 550–572 (HIYLTVRNPTIVSSSSDTKIAKR) are Cytoplasmic-facing. Residues 573-596 (MATLIFTDFLCMAPISFFAISASL) form a helical membrane-spanning segment. Residues 597 to 607 (KVPLITVSKAK) are Extracellular-facing. Residues 608–629 (ILLVLFYPINSCANPFLYAIFT) traverse the membrane as a helical segment. The Cytoplasmic segment spans residues 630–692 (KNFRRDFFIL…LVPLNHSSQN (63 aa)).

Belongs to the G-protein coupled receptor 1 family. FSH/LSH/TSH subfamily. In terms of assembly, homotrimer. Functions as a homotrimer binding the FSH hormone heterodimer composed of CGA and FSHB. Interacts with ARRB2. Interacts with APPL2; interaction is independent of follicle stimulating hormone stimulation. N-glycosylated; indirectly required for FSH-binding, possibly via a conformational change that allows high affinity binding of hormone. In terms of processing, sulfated. In terms of tissue distribution, sertoli cells and ovarian granulosa cells.

The protein localises to the cell membrane. In terms of biological role, g protein-coupled receptor for follitropin, the follicle-stimulating hormone. Through cAMP production activates the downstream PI3K-AKT and ERK1/ERK2 signaling pathways. The sequence is that of Follicle-stimulating hormone receptor (Fshr) from Rattus norvegicus (Rat).